The chain runs to 132 residues: MIVRTLEQARQSDRRVKADNWESVRMLLKDDNMGFSFHITTLYANKETPIHYQNHLESVYCISGEGEVETVADGEVHAIKPGTLYVLDKHDKHLLRAFSEMTVACVFNPPLNGKETHDENGVYPLEAETIME.

This sequence belongs to the ectoine synthase family.

The enzyme catalyses (2S)-4-acetamido-2-aminobutanoate = L-ectoine + H2O. It participates in amine and polyamine biosynthesis; ectoine biosynthesis; L-ectoine from L-aspartate 4-semialdehyde: step 3/3. Catalyzes the circularization of gamma-N-acetyl-alpha,gamma-diaminobutyric acid (ADABA) to ectoine (1,4,5,6-tetrahydro-2-methyl-4-pyrimidine carboxylic acid), which is an excellent osmoprotectant. This is L-ectoine synthase from Hahella chejuensis (strain KCTC 2396).